Reading from the N-terminus, the 602-residue chain is Elongation factor 4 (602 aa).

One can recognise a tr-type G domain in the interval 8–189; the sequence is KNIRNFSIIA…KIITTIPAPS (182 aa). GTP-binding positions include 20 to 25 and 136 to 139; these read DHGKST and NKID.

Belongs to the TRAFAC class translation factor GTPase superfamily. Classic translation factor GTPase family. LepA subfamily.

The protein localises to the cell inner membrane. It carries out the reaction GTP + H2O = GDP + phosphate + H(+). Its function is as follows. Required for accurate and efficient protein synthesis under certain stress conditions. May act as a fidelity factor of the translation reaction, by catalyzing a one-codon backward translocation of tRNAs on improperly translocated ribosomes. Back-translocation proceeds from a post-translocation (POST) complex to a pre-translocation (PRE) complex, thus giving elongation factor G a second chance to translocate the tRNAs correctly. Binds to ribosomes in a GTP-dependent manner. This chain is Elongation factor 4, found in Helicobacter pylori (strain ATCC 700392 / 26695) (Campylobacter pylori).